A 212-amino-acid chain; its full sequence is Ribosomal RNA large subunit methyltransferase E (212 aa).

G57, W59, D77, D93, and D122 together coordinate S-adenosyl-L-methionine. Residue K162 is the Proton acceptor of the active site.

It belongs to the class I-like SAM-binding methyltransferase superfamily. RNA methyltransferase RlmE family.

It localises to the cytoplasm. The enzyme catalyses uridine(2552) in 23S rRNA + S-adenosyl-L-methionine = 2'-O-methyluridine(2552) in 23S rRNA + S-adenosyl-L-homocysteine + H(+). Specifically methylates the uridine in position 2552 of 23S rRNA at the 2'-O position of the ribose in the fully assembled 50S ribosomal subunit. In Coxiella burnetii (strain RSA 493 / Nine Mile phase I), this protein is Ribosomal RNA large subunit methyltransferase E.